Here is a 658-residue protein sequence, read N- to C-terminus: Alkyldihydroxyacetonephosphate synthase, peroxisomal (658 aa).

Over residues 1-24 the composition is skewed to low complexity; that stretch reads MAEAAAAAAAAAAAGETSASSGSA. The segment at 1 to 37 is disordered; sequence MAEAAAAAAAAAAAGETSASSGSAAERDPDQDRAGRR. The N-terminal 58 residues, 1-58, are a transit peptide targeting the peroxisome; it reads MAEAAAAAAAAAAAGETSASSGSAAERDPDQDRAGRRLRVLSGHLLGRPQEALSTNEC. Over residues 25-35 the composition is skewed to basic and acidic residues; it reads AERDPDQDRAG. Serine 65 bears the Phosphoserine mark. Residue threonine 74 is modified to Phosphothreonine. Lysine 102 is subject to N6-acetyllysine. The 183-residue stretch at 202 to 384 folds into the FAD-binding PCMH-type domain; sequence FERIPDIVLW…TEATIKIRPT (183 aa). Residues 234–240, 303–309, and 316–319 each bind FAD; these read PIGGGTS, DSLEFST, and TRAS. Position 347 is an N6-acetyllysine (lysine 347). 368–374 contacts FAD; the sequence is EGTLGVI. Residue arginine 515 participates in substrate binding. The Proton donor/acceptor role is filled by tyrosine 578. Important for enzyme activity regions lie at residues 615 to 617 and 654 to 658; these read HHH and NRNLL.

It belongs to the FAD-binding oxidoreductase/transferase type 4 family. In terms of assembly, homodimer. FAD serves as cofactor.

Its subcellular location is the peroxisome membrane. The protein localises to the peroxisome. It carries out the reaction a long chain fatty alcohol + a 1-acylglycerone 3-phosphate = a 1-O-alkylglycerone 3-phosphate + a long-chain fatty acid + H(+). The enzyme catalyses hexadecan-1-ol + 1-hexadecanoylglycerone 3-phosphate = 1-O-hexadecylglycerone 3-phosphate + hexadecanoate + H(+). The catalysed reaction is 1-hexadecanoylglycerone 3-phosphate + a long-chain fatty acid = a 1-acylglycerone 3-phosphate + hexadecanoate. The protein operates within glycerolipid metabolism; ether lipid biosynthesis. With respect to regulation, inhibited by N-ethylmaleimide, p-bromophenacylbromide, 2,4- dinitrofluorobenzene and divalent cations such as such as Mn(2+), Mg(2+) and Zn(2+). Inhibition by p-bromophenacylbromide is strongly pH dependent and is highest at alkaline conditions. Its function is as follows. Catalyzes the exchange of the acyl chain in acyl-dihydroxyacetonephosphate (acyl-DHAP) for a long chain fatty alcohol, yielding the first ether linked intermediate, i.e. alkyl-dihydroxyacetonephosphate (alkyl-DHAP), in the pathway of ether lipid biosynthesis. This Cavia porcellus (Guinea pig) protein is Alkyldihydroxyacetonephosphate synthase, peroxisomal (AGPS).